Reading from the N-terminus, the 248-residue chain is Probable transcriptional regulatory protein trd_1132 (248 aa).

The protein belongs to the TACO1 family.

The protein resides in the cytoplasm. This Thermomicrobium roseum (strain ATCC 27502 / DSM 5159 / P-2) protein is Probable transcriptional regulatory protein trd_1132.